We begin with the raw amino-acid sequence, 519 residues long: Anthranilate synthase component 1 (519 aa).

L-tryptophan is bound by residues S39 and 290 to 292 (PYM). 327–328 (GT) contributes to the chorismate binding site. Position 360 (E360) interacts with Mg(2+). Residues Y448, R468, 482–484 (GAG), and G484 contribute to the chorismate site. E497 lines the Mg(2+) pocket.

This sequence belongs to the anthranilate synthase component I family. In terms of assembly, heterotetramer consisting of two non-identical subunits: a beta subunit (TrpG) and a large alpha subunit (TrpE). Mg(2+) is required as a cofactor.

The enzyme catalyses chorismate + L-glutamine = anthranilate + pyruvate + L-glutamate + H(+). The protein operates within amino-acid biosynthesis; L-tryptophan biosynthesis; L-tryptophan from chorismate: step 1/5. Feedback inhibited by tryptophan. Functionally, part of a heterotetrameric complex that catalyzes the two-step biosynthesis of anthranilate, an intermediate in the biosynthesis of L-tryptophan. In the first step, the glutamine-binding beta subunit (TrpG) of anthranilate synthase (AS) provides the glutamine amidotransferase activity which generates ammonia as a substrate that, along with chorismate, is used in the second step, catalyzed by the large alpha subunit of AS (TrpE) to produce anthranilate. In the absence of TrpG, TrpE can synthesize anthranilate directly from chorismate and high concentrations of ammonia. This is Anthranilate synthase component 1 (trpE) from Serratia marcescens.